The chain runs to 148 residues: MNKHIRQQRIRELIQQEGVGNQHDLLRLLRESGIKVAQATLSRDCAELGIVRSKTHAGYRLLLGDESTGRIIKGLVGMEVTSVAANETSVIVRTLPGRAHGVGSWLDQFKSQLILGTIAGDDTVLVIPDSVQNISVLMSYIQKNLSTN.

This sequence belongs to the ArgR family.

Its subcellular location is the cytoplasm. It functions in the pathway amino-acid biosynthesis; L-arginine biosynthesis [regulation]. Regulates arginine biosynthesis genes. This Chlorobium luteolum (strain DSM 273 / BCRC 81028 / 2530) (Pelodictyon luteolum) protein is Arginine repressor.